The chain runs to 512 residues: Bifunctional purine biosynthesis protein PurH (512 aa).

The region spanning 1–144 is the MGS-like domain; that stretch reads MKRALVSVSD…KNYRDVVVVV (144 aa).

The protein belongs to the PurH family.

The enzyme catalyses (6R)-10-formyltetrahydrofolate + 5-amino-1-(5-phospho-beta-D-ribosyl)imidazole-4-carboxamide = 5-formamido-1-(5-phospho-D-ribosyl)imidazole-4-carboxamide + (6S)-5,6,7,8-tetrahydrofolate. It carries out the reaction IMP + H2O = 5-formamido-1-(5-phospho-D-ribosyl)imidazole-4-carboxamide. It participates in purine metabolism; IMP biosynthesis via de novo pathway; 5-formamido-1-(5-phospho-D-ribosyl)imidazole-4-carboxamide from 5-amino-1-(5-phospho-D-ribosyl)imidazole-4-carboxamide (10-formyl THF route): step 1/1. Its pathway is purine metabolism; IMP biosynthesis via de novo pathway; IMP from 5-formamido-1-(5-phospho-D-ribosyl)imidazole-4-carboxamide: step 1/1. The polypeptide is Bifunctional purine biosynthesis protein PurH (Ligilactobacillus salivarius (strain UCC118) (Lactobacillus salivarius)).